A 293-amino-acid polypeptide reads, in one-letter code: MKHGIYYAYWEQEWEADYKYYIEKVAKLGFDILEIAASPLPFYSDIQINELKACAHGNGITLTVGHGPSAEQNLSSPDPDIRKNAKAFYTDLLKRLYKLDVHLIGGALYSYWPIDYTKTIDKKGDWERSVESVREVAKVAEACGVDFCLEVLNRFENYLINTAQEGVDFVKQVDHNNVKVMLDTFHMNIEEDSIGGAIRTAGSYLGHLHTGECNRKVPGRGRIPWVEIGEALADIGYNGSVVMEPFVRMGGTVGSNIKVWRDISNGADEKMLDREAQAALDFSRYVLECHKHS.

The substrate site is built by Tyr-6 and Ala-107. Glu-150 functions as the Proton donor/acceptor in the catalytic mechanism. Position 150 (Glu-150) interacts with Mn(2+). Residues Glu-156 and 183-186 (DTFH) each bind substrate. Mn(2+) contacts are provided by Asp-183 and His-209. Substrate is bound at residue Arg-215. The active-site Proton donor/acceptor is Glu-244. Mn(2+) is bound at residue Glu-244.

The protein belongs to the hyi family. As to quaternary structure, homotetramer. Mn(2+) is required as a cofactor. Requires Co(2+) as cofactor.

It catalyses the reaction D-allulose = keto-D-fructose. Its function is as follows. Involved in the biosynthesis of D-psicose. Catalyzes the reversible epimerization of D-fructose at the C3 position to yield D-psicose. The enzyme is highly specific for D-psicose and shows very low activity with D-tagatose. The chain is D-psicose 3-epimerase from Ruminiclostridium cellulolyticum (strain ATCC 35319 / DSM 5812 / JCM 6584 / H10) (Clostridium cellulolyticum).